A 728-amino-acid polypeptide reads, in one-letter code: Catalase-peroxidase (728 aa).

Residues 91 to 218 (WHSAGTYRTA…LAAVQMGLIY (128 aa)) constitute a cross-link (tryptophyl-tyrosyl-methioninium (Trp-Tyr) (with M-244)). H92 serves as the catalytic Proton acceptor. Positions 218 to 244 (YVNPEGPDGTPDPVAAAHDIRETFARM) form a cross-link, tryptophyl-tyrosyl-methioninium (Tyr-Met) (with W-91). H259 contributes to the heme b binding site.

This sequence belongs to the peroxidase family. Peroxidase/catalase subfamily. In terms of assembly, homodimer or homotetramer. Requires heme b as cofactor. Post-translationally, formation of the three residue Trp-Tyr-Met cross-link is important for the catalase, but not the peroxidase activity of the enzyme.

It carries out the reaction H2O2 + AH2 = A + 2 H2O. The enzyme catalyses 2 H2O2 = O2 + 2 H2O. In terms of biological role, bifunctional enzyme with both catalase and broad-spectrum peroxidase activity. The chain is Catalase-peroxidase from Burkholderia lata (strain ATCC 17760 / DSM 23089 / LMG 22485 / NCIMB 9086 / R18194 / 383).